A 567-amino-acid polypeptide reads, in one-letter code: Proline--tRNA ligase (567 aa).

This sequence belongs to the class-II aminoacyl-tRNA synthetase family. ProS type 1 subfamily. In terms of assembly, homodimer.

Its subcellular location is the cytoplasm. It carries out the reaction tRNA(Pro) + L-proline + ATP = L-prolyl-tRNA(Pro) + AMP + diphosphate. Its function is as follows. Catalyzes the attachment of proline to tRNA(Pro) in a two-step reaction: proline is first activated by ATP to form Pro-AMP and then transferred to the acceptor end of tRNA(Pro). As ProRS can inadvertently accommodate and process non-cognate amino acids such as alanine and cysteine, to avoid such errors it has two additional distinct editing activities against alanine. One activity is designated as 'pretransfer' editing and involves the tRNA(Pro)-independent hydrolysis of activated Ala-AMP. The other activity is designated 'posttransfer' editing and involves deacylation of mischarged Ala-tRNA(Pro). The misacylated Cys-tRNA(Pro) is not edited by ProRS. This is Proline--tRNA ligase from Staphylococcus aureus (strain bovine RF122 / ET3-1).